Reading from the N-terminus, the 114-residue chain is Histone H2A.Z-specific chaperone chz-1 (114 aa).

Residues 1–22 (MSTENGTTDTTLAGTAEANTPF) show a composition bias toward polar residues. A disordered region spans residues 1 to 114 (MSTENGTTDT…FVPEDEEMEE (114 aa)). Positions 24–40 (SKGKGKAAAESEDHPMG) are enriched in basic and acidic residues. Acidic residues-rich tracts occupy residues 41–68 (EAED…EEID) and 93–114 (PAEE…EMEE).

This sequence belongs to the CHZ1 family. Forms a heterotrimer with H2A.Z-H2B, stabilizing the association of the histone dimer. Also, with a lower affinity, forms a heterotrimer with H2A-H2B.

It is found in the nucleus. Forms a chaperone-bound H2A.Z-H2B complex that acts as a source for SWR1 complex-dependent H2A to H2A.Z histone replacement in chromatin. The sequence is that of Histone H2A.Z-specific chaperone chz-1 (chz-1) from Neurospora crassa (strain ATCC 24698 / 74-OR23-1A / CBS 708.71 / DSM 1257 / FGSC 987).